Here is a 562-residue protein sequence, read N- to C-terminus: MKKKKQALKVLLSVGILSSSFAFAHTSSAAPNNVLSTEKYNKEIKSPEFISGKLSGPSSQKAQDVVFHYMNTNKDKYKLGNENAQNSFKVTEVVKDPVEQATVVRLQQVYNNIPVWGSTQLAHVAKDGTLKVVSGTVAPDLDKKEKLKGQKQVDSKKAIQAAEKDLGFKPTYEKSPSSELYVYQNGSDTTYAYVVNLNFLSPEPGNYYYFVDAISGKVLDKYNTIDSVAGPKADVKQAAKPAAKPVTGTNAIGSGKGVLGDTKSLKTTLSSSTYYLQDNTRGATIYTYDAKNRTSLPGTLWTDTDNTYNATRDAAAVDAHYYAGVTYDYYKNKFNRNSYDNAGAPLKSTVHYSSGYNNAFWNGSQMVYGDGDGTTFVPLSGGLDVIGHELTHAVTERSSNLIYQYESGALNEAISDIFGTLVEYYDNRNPDWEIGEDIYTPGTSGDALRSMSNPAKYGDPDHYSKRYTGSSDNGGVHTNSGIINKAAYLLANGGTHYGVTVTGIGGDKLGKIYYRANTLYFTQSTTFSQARAGLVQAAADLYGSGSQEVISVGKSFDAVGVQ.

The signal sequence occupies residues 1–24 (MKKKKQALKVLLSVGILSSSFAFA). Residues 25 to 245 (HTSSAAPNNV…KQAAKPAAKP (221 aa)) constitute a propeptide, activation peptide. The Ca(2+) site is built by Asp303, Asp305, and Asp384. Residue His388 participates in Zn(2+) binding. Glu389 is a catalytic residue. The Zn(2+) site is built by His392 and Glu412. Ca(2+) contacts are provided by Glu423, Asn429, Asp431, Glu433, Glu436, Tyr439, Thr440, and Asp446. Catalysis depends on His477, which acts as the Proton donor.

This sequence belongs to the peptidase M4 family. The cofactor is Ca(2+). It depends on Zn(2+) as a cofactor.

It is found in the secreted. The catalysed reaction is Similar, but not identical, to that of thermolysin.. Extracellular zinc metalloprotease. The chain is Bacillolysin (nprM) from Priestia megaterium (strain DSM 319 / IMG 1521) (Bacillus megaterium).